A 354-amino-acid polypeptide reads, in one-letter code: Uroporphyrinogen decarboxylase (354 aa).

Substrate-binding positions include 27 to 31 (RQAGR), D77, Y154, T209, and H327.

Belongs to the uroporphyrinogen decarboxylase family. In terms of assembly, homodimer.

It is found in the cytoplasm. The enzyme catalyses uroporphyrinogen III + 4 H(+) = coproporphyrinogen III + 4 CO2. It participates in porphyrin-containing compound metabolism; protoporphyrin-IX biosynthesis; coproporphyrinogen-III from 5-aminolevulinate: step 4/4. In terms of biological role, catalyzes the decarboxylation of four acetate groups of uroporphyrinogen-III to yield coproporphyrinogen-III. This is Uroporphyrinogen decarboxylase from Escherichia coli O7:K1 (strain IAI39 / ExPEC).